A 143-amino-acid chain; its full sequence is Hemoglobin subunit alpha-1 (143 aa).

Ser2 is subject to N-acetylserine. The Globin domain occupies 2–143 (SLSTKDKETV…VSLALAEKYR (142 aa)). His60 lines the O2 pocket. Position 89 (His89) interacts with heme b.

It belongs to the globin family. As to quaternary structure, hb1 is a heterotetramer of two alpha-1 chains and two beta-1 chains. Red blood cells.

Functionally, involved in oxygen transport from gills to the various peripheral tissues. This chain is Hemoglobin subunit alpha-1, found in Liparis tunicatus (Kelp snailfish).